The sequence spans 266 residues: Norfluorocurarine synthase 2 (266 aa).

An AB hydrolase-1 domain is found at 11–121 (HFVLVHGAGH…VMPDSTHPPN (111 aa)). Catalysis depends on residues S86, D216, and H244.

This sequence belongs to the AB hydrolase superfamily. As to quaternary structure, homodimer.

The catalysed reaction is 17-dehydropreakuammicine + H2O = norfluorocurarine + methanol + CO2. Its pathway is alkaloid biosynthesis. In terms of biological role, hydrolase involved in the biosynthesis of curare monoterpene indole alkaloids (MIAs), natural products such as diaboline, a pharmacologically active compound used to regulate blood pressure. Curare alkaloids act as animal glycine receptor antagonists. Catalyzes the conversion of dehydropreakuammicine to norfluorocurarine. This is Norfluorocurarine synthase 2 from Strychnos sp.